A 300-amino-acid chain; its full sequence is Iron-dependent extradiol dioxygenase (300 aa).

2 VOC domains span residues S5–G120 and G142–E270. H145 serves as a coordination point for Fe cation. Positions 200, 215, 250, and 256 each coordinate substrate. H215 lines the Fe cation pocket. A Fe cation-binding site is contributed by E266.

The protein belongs to the extradiol ring-cleavage dioxygenase family. As to quaternary structure, homodimer. Requires Fe(2+) as cofactor.

It carries out the reaction 3,4-dihydroxy-9,10-secoandrosta-1,3,5(10)-triene-9,17-dione + O2 = (1E,2Z)-3-hydroxy-5,9,17-trioxo-4,5:9,10-disecoandrosta-1(10),2-dien-4-oate + H(+). It participates in steroid metabolism; cholesterol metabolism. In terms of biological role, catalyzes the meta-cleavage of 3,4-dihydroxy-9,10-seconandrost-1,3,5(10)-triene-9,17-dione (3,4-DHSA) to produce 4,5-9,10-diseco-3-hydroxy-5,9,17-trioxoandrosta-1(10),2-diene-4-oic acid (4,9-DSHA). Also involved in biphenyl and polychlorinated biphenyls (PCBs) degradation. The protein is Iron-dependent extradiol dioxygenase (hsaC) of Rhodococcus jostii (strain RHA1).